A 339-amino-acid chain; its full sequence is Phenylalanine--tRNA ligase alpha subunit (339 aa).

Glutamate 254 contributes to the Mg(2+) binding site.

The protein belongs to the class-II aminoacyl-tRNA synthetase family. Phe-tRNA synthetase alpha subunit type 1 subfamily. In terms of assembly, tetramer of two alpha and two beta subunits. Mg(2+) serves as cofactor.

It localises to the cytoplasm. The enzyme catalyses tRNA(Phe) + L-phenylalanine + ATP = L-phenylalanyl-tRNA(Phe) + AMP + diphosphate + H(+). The protein is Phenylalanine--tRNA ligase alpha subunit of Lachnoclostridium phytofermentans (strain ATCC 700394 / DSM 18823 / ISDg) (Clostridium phytofermentans).